An 817-amino-acid chain; its full sequence is LPS-assembly protein LptD (817 aa).

A signal peptide spans 1–26; sequence MPALVVSPDLVRGAAGASAAPTPAPA. The tract at residues 1–101 is disordered; it reads MPALVVSPDL…ARKPGSTEVR (101 aa). A compositionally biased stretch (low complexity) spans 13–90; it reads GAAGASAAPT…PAASASPADA (78 aa).

This sequence belongs to the LptD family. In terms of assembly, component of the lipopolysaccharide transport and assembly complex. Interacts with LptE and LptA.

The protein resides in the cell outer membrane. In terms of biological role, together with LptE, is involved in the assembly of lipopolysaccharide (LPS) at the surface of the outer membrane. The sequence is that of LPS-assembly protein LptD from Azoarcus sp. (strain BH72).